A 432-amino-acid chain; its full sequence is Guanine nucleotide-binding protein subunit alpha (432 aa).

Residues 1–97 (MGGCMSTPEA…SKGNKDRSNQ (97 aa)) are disordered. Residue Gly2 is the site of N-myristoyl glycine attachment. The S-palmitoyl cysteine moiety is linked to residue Cys4. The span at 21–52 (PSTSTSSRPPQASTSATATAAGAGTSAANGTA) shows a compositional bias: low complexity. Positions 111 to 432 (KECKILLLGS…QNALRDSGIL (322 aa)) constitute a G-alpha domain. Residues 114-127 (KILLLGSGESGKST) are G1 motif. The GTP site is built by Glu122, Ser123, Gly124, Lys125, Ser126, Thr127, Asp230, Leu255, Thr261, Gly283, Asn349, Lys350, Asp352, and Ala404. Mg(2+) is bound at residue Ser126. The G2 motif stretch occupies residues 253–261 (DVLRARTKT). Thr261 provides a ligand contact to Mg(2+). Residues 276-285 (IHMFDVGGQR) form a G3 motif region. Residues 345 to 352 (ILFLNKID) form a G4 motif region. A G5 motif region spans residues 402-407 (TQATDT).

The protein belongs to the G-alpha family. G proteins are composed of 3 units; alpha, beta and gamma. The alpha chain contains the guanine nucleotide binding site. Requires Mg(2+) as cofactor.

Functionally, guanine nucleotide-binding proteins (G proteins) are involved as modulators or transducers in various transmembrane signaling systems. Involved in the mating pathway. The polypeptide is Guanine nucleotide-binding protein subunit alpha (GPA1) (Cryptococcus neoformans var. neoformans serotype D (strain B-3501A) (Filobasidiella neoformans)).